A 112-amino-acid chain; its full sequence is Large ribosomal subunit protein eL30y (112 aa).

The protein belongs to the eukaryotic ribosomal protein eL30 family.

The polypeptide is Large ribosomal subunit protein eL30y (RPL30B) (Arabidopsis thaliana (Mouse-ear cress)).